The chain runs to 168 residues: Photosystem I assembly protein Ycf3 (168 aa).

TPR repeat units follow at residues 35–68, 72–105, and 120–153; these read AFTYYRDGMSAQSEGNYAEALQNYYEAMRLEIDP, SYILYNIGLIHTSNGEHTKALEYYFRALERNPFL, and GEQAIRQGDSEIAEAWFDQAAEYWKQAMALTPGN.

The protein belongs to the Ycf3 family.

Its subcellular location is the plastid. It is found in the chloroplast thylakoid membrane. Essential for the assembly of the photosystem I (PSI) complex. May act as a chaperone-like factor to guide the assembly of the PSI subunits. In Panax ginseng (Korean ginseng), this protein is Photosystem I assembly protein Ycf3.